The sequence spans 230 residues: MKSLNTLVILTSVISTSVFAGAYVENREAYNLASDQMEFMLRVGYNSDMGAGIMLTNTYTLQRDDELKHGYNEIEGWYPLFKPTDKLTIQPGGLINDKSIGSGGAVYLDVNYKFTPWFNLTVRNRYNHNNYSSTDLNGELDNNDSYEIGNYWNFIITDKFSYTFEPHYFYNINDFNSSNGTKHHWEITNTFRYRINEHWLPYFELRWLDRNVGPYHREQNQIRIGAKYFF.

The signal sequence occupies residues 1–20 (MKSLNTLVILTSVISTSVFA).

It belongs to the oligogalacturonate-specific porin KdgM (TC 1.B.35) family. OmpL subfamily.

Its subcellular location is the cell outer membrane. In terms of biological role, outer membrane channel protein that allows an efficient diffusion of low-molecular-weight solutes such as small sugars and tetraglycine. However, the specific substrate recognized by the OmpL channel is unknown. The protein is Porin OmpL (ompL) of Salmonella paratyphi A (strain ATCC 9150 / SARB42).